The primary structure comprises 421 residues: CinA-like protein (421 aa).

Belongs to the CinA family.

In Mycobacterium sp. (strain JLS), this protein is CinA-like protein.